Here is an 890-residue protein sequence, read N- to C-terminus: Translation initiation factor IF-2 (890 aa).

Positions 45–304 (LIDHLNQKNS…LQQGFQKPAQ (260 aa)) are disordered. A compositionally biased stretch (polar residues) spans 67-81 (STLNIPGTGGKSKSV). Over residues 92-217 (VKRDPQEAER…RMAEENKWTD (126 aa)) the composition is skewed to basic and acidic residues. The segment covering 252–266 (GRGRNAKAARPKKGN) has biased composition (basic residues). A compositionally biased stretch (basic and acidic residues) spans 267–280 (KHAESKADREEARA). A tr-type G domain is found at 389–558 (PRAPVVTIMG…LLQAEVLELK (170 aa)). The interval 398-405 (GHVDHGKT) is G1. 398–405 (GHVDHGKT) serves as a coordination point for GTP. A G2 region spans residues 423 to 427 (GITQH). Residues 444–447 (DTPG) form a G3 region. GTP contacts are provided by residues 444-448 (DTPGH) and 498-501 (NKID). A G4 region spans residues 498–501 (NKID). The segment at 534-536 (SAK) is G5. Lys-808 is modified (N6-acetyllysine).

The protein belongs to the TRAFAC class translation factor GTPase superfamily. Classic translation factor GTPase family. IF-2 subfamily.

The protein localises to the cytoplasm. Its function is as follows. One of the essential components for the initiation of protein synthesis. Protects formylmethionyl-tRNA from spontaneous hydrolysis and promotes its binding to the 30S ribosomal subunits. Also involved in the hydrolysis of GTP during the formation of the 70S ribosomal complex. This is Translation initiation factor IF-2 from Escherichia coli (strain SMS-3-5 / SECEC).